The chain runs to 197 residues: MQSPVINELIDAFKLLPTIGPKSAQRLAYFLLQNHQQDGHRLASAIESALEKVGYCQQCRNLSETEICGFCASKSRQTDQLCIVETPTDVVAIEQSGIYKGQYFVLMGHLSPIDGIGPDELGLPILRDRLAQGEIQELILATNPTVEGEATAHYIQQMAIEFNISVTRLAQGIPLGGELEYIDSGTLGQAFAGRKAV.

Residues 56 to 71 (CQQCRNLSETEICGFC) form a C4-type zinc finger. The Toprim domain occupies 79–174 (DQLCIVETPT…SVTRLAQGIP (96 aa)).

It belongs to the RecR family.

May play a role in DNA repair. It seems to be involved in an RecBC-independent recombinational process of DNA repair. It may act with RecF and RecO. The protein is Recombination protein RecR of Hydrogenovibrio crunogenus (strain DSM 25203 / XCL-2) (Thiomicrospira crunogena).